The following is a 712-amino-acid chain: DNA ligase (712 aa).

NAD(+)-binding positions include 53–57 (DAEFD), 103–104 (SL), and glutamate 133. The active-site N6-AMP-lysine intermediate is the lysine 135. NAD(+) contacts are provided by arginine 156, glutamate 196, lysine 315, and lysine 339. Cysteine 433, cysteine 436, cysteine 452, and cysteine 458 together coordinate Zn(2+). A BRCT domain is found at 622–711 (SIERTLEGLS…PERDAEDGEP (90 aa)).

Belongs to the NAD-dependent DNA ligase family. LigA subfamily. It depends on Mg(2+) as a cofactor. Requires Mn(2+) as cofactor.

It carries out the reaction NAD(+) + (deoxyribonucleotide)n-3'-hydroxyl + 5'-phospho-(deoxyribonucleotide)m = (deoxyribonucleotide)n+m + AMP + beta-nicotinamide D-nucleotide.. In terms of biological role, DNA ligase that catalyzes the formation of phosphodiester linkages between 5'-phosphoryl and 3'-hydroxyl groups in double-stranded DNA using NAD as a coenzyme and as the energy source for the reaction. It is essential for DNA replication and repair of damaged DNA. This is DNA ligase from Mycolicibacterium gilvum (strain PYR-GCK) (Mycobacterium gilvum (strain PYR-GCK)).